The primary structure comprises 183 residues: Putative 3-methyladenine DNA glycosylase (183 aa).

This sequence belongs to the DNA glycosylase MPG family.

This chain is Putative 3-methyladenine DNA glycosylase, found in Legionella pneumophila subsp. pneumophila (strain Philadelphia 1 / ATCC 33152 / DSM 7513).